The chain runs to 471 residues: ATP synthase subunit beta (471 aa).

ATP is bound at residue 153–160 (GGAGVGKT).

It belongs to the ATPase alpha/beta chains family. As to quaternary structure, F-type ATPases have 2 components, CF(1) - the catalytic core - and CF(0) - the membrane proton channel. CF(1) has five subunits: alpha(3), beta(3), gamma(1), delta(1), epsilon(1). CF(0) has three main subunits: a(1), b(2) and c(9-12). The alpha and beta chains form an alternating ring which encloses part of the gamma chain. CF(1) is attached to CF(0) by a central stalk formed by the gamma and epsilon chains, while a peripheral stalk is formed by the delta and b chains.

It is found in the cell inner membrane. The catalysed reaction is ATP + H2O + 4 H(+)(in) = ADP + phosphate + 5 H(+)(out). In terms of biological role, produces ATP from ADP in the presence of a proton gradient across the membrane. The catalytic sites are hosted primarily by the beta subunits. This Verminephrobacter eiseniae (strain EF01-2) protein is ATP synthase subunit beta.